The following is a 110-amino-acid chain: MKHVAAYLLLVSAGNTSPSAEDVKKVLAAADIQADEERLSVLIKELEGKDVNEVIAEGSKKLASVPSGGAAPAAAAGGAAAGGAAEEKAEDKPAEKDEESDDDMGFGLFD.

Serine 59 carries the O-(pantetheine 4'-phosphoryl)serine; in acyl carrier protein form modification. Residues 62 to 110 (LASVPSGGAAPAAAAGGAAAGGAAEEKAEDKPAEKDEESDDDMGFGLFD) form a disordered region. Over residues 63 to 84 (ASVPSGGAAPAAAAGGAAAGGA) the composition is skewed to low complexity. Residues 85–95 (AEEKAEDKPAE) are compositionally biased toward basic and acidic residues. Serine 100 carries the phosphoserine; in ribosomal stalk form modification.

It belongs to the eukaryotic ribosomal protein P1/P2 family. In terms of assembly, the phosphorylated form is part of the ribosomal stalk involved in the interaction of the elongation factors with the ribosome during protein synthesis. The phosphopantetheinylated form is part of the 10S triacylglycerol biosynthetic complex involved in de novo fatty acid biosynthesis. Post-translationally, 4'-phosphopantetheine is transferred from CoA to a specific serine by acpS. This modification is essential for activity because fatty acids are bound in thioester linkage to the sulfhydryl of the prosthetic group.

The protein localises to the cytoplasm. Probable bifunctional protein. The phosphorylated protein plays an important role in the elongation step of protein synthesis. The phosphopantetheinylated protein acts as an acyl carrier protein. The sequence is that of Large ribosomal subunit protein P2 from Rhodotorula glutinis (Yeast).